The primary structure comprises 515 residues: Anthranilate synthase component 1 (515 aa).

L-tryptophan-binding positions include Thr40 and 291–293 (PYM). Residue 328–329 (GT) participates in chorismate binding. Mg(2+) is bound at residue Glu361. Residues Tyr449, Arg469, 483–485 (GAG), and Gly485 contribute to the chorismate site. Glu498 is a Mg(2+) binding site.

It belongs to the anthranilate synthase component I family. Heterotetramer consisting of two non-identical subunits: a beta subunit (TrpG) and a large alpha subunit (TrpE). It depends on Mg(2+) as a cofactor.

It carries out the reaction chorismate + L-glutamine = anthranilate + pyruvate + L-glutamate + H(+). It participates in amino-acid biosynthesis; L-tryptophan biosynthesis; L-tryptophan from chorismate: step 1/5. Feedback inhibited by tryptophan. In terms of biological role, part of a heterotetrameric complex that catalyzes the two-step biosynthesis of anthranilate, an intermediate in the biosynthesis of L-tryptophan. In the first step, the glutamine-binding beta subunit (TrpG) of anthranilate synthase (AS) provides the glutamine amidotransferase activity which generates ammonia as a substrate that, along with chorismate, is used in the second step, catalyzed by the large alpha subunit of AS (TrpE) to produce anthranilate. In the absence of TrpG, TrpE can synthesize anthranilate directly from chorismate and high concentrations of ammonia. This chain is Anthranilate synthase component 1 (trpE), found in Buchnera aphidicola subsp. Schizaphis graminum (strain Sg).